The following is a 720-amino-acid chain: Asp/Glu-specific dipeptidyl-peptidase (720 aa).

An N-terminal signal peptide occupies residues 1–21; the sequence is MKKRLLLPLFAALCLSQIAHA. Cys-69 and Cys-86 are joined by a disulfide. Active-site charge relay system residues include His-85, Asp-227, and Ser-655.

It belongs to the peptidase S46 family. Homodimer.

It localises to the cell surface. Its activity is regulated as follows. Enzyme activity is completely blocked by diisopropyl-fluorophosphates, moderately by phenylmethylsulfonyl fluoride (PMSF) and 4-(2-methyl)benzenesulfonyl fluoride, and slightly by pepstatin in vitro. Its function is as follows. Catalyzes the removal of dipeptides from the N-terminus of oligopeptides. Shows a strict specificity for acidic residues (Asp or Glu) in the P1 position, and has a hydrophobic residue preference at the P2 position. Preferentially cleaves the synthetic substrate Leu-Asp-methylcoumaryl-7-amide (Leu-Asp-MCA) as compared to Leu-Glu-MCA. Is involved in amino acid metabolism and bacterial growth of asaccharolytic P.gingivalis, that utilizes amino acids from extracellular proteinaceous nutrients as energy and carbon sources. The polypeptide is Asp/Glu-specific dipeptidyl-peptidase (Porphyromonas gingivalis (strain ATCC 33277 / DSM 20709 / CIP 103683 / JCM 12257 / NCTC 11834 / 2561)).